The sequence spans 55 residues: UPF0391 membrane protein RALTA_A0099 (55 aa).

2 consecutive transmembrane segments (helical) span residues 5–25 (ALVF…GIAA) and 30–50 (IAKI…VMGL).

Belongs to the UPF0391 family.

The protein localises to the cell membrane. The sequence is that of UPF0391 membrane protein RALTA_A0099 from Cupriavidus taiwanensis (strain DSM 17343 / BCRC 17206 / CCUG 44338 / CIP 107171 / LMG 19424 / R1) (Ralstonia taiwanensis (strain LMG 19424)).